Reading from the N-terminus, the 461-residue chain is Autophagy-related protein 6 (461 aa).

Over residues 75 to 88 (EEHGTDSSPDHDSS) the composition is skewed to basic and acidic residues. Disordered regions lie at residues 75–94 (EEHG…ASLV) and 101–124 (EEPV…PISG). Positions 103-113 (PVPVSAPSPES) are enriched in low complexity. A coiled-coil region spans residues 194–286 (TKLRDSIQEC…VLNRLDHLRN (93 aa)).

It belongs to the beclin family.

Its function is as follows. Required for cytoplasm to vacuole transport (Cvt) and autophagy. Also involved in endosome-to-Golgi retrograde transport. This Meyerozyma guilliermondii (strain ATCC 6260 / CBS 566 / DSM 6381 / JCM 1539 / NBRC 10279 / NRRL Y-324) (Yeast) protein is Autophagy-related protein 6 (ATG6).